The primary structure comprises 298 residues: 4-hydroxy-tetrahydrodipicolinate synthase (298 aa).

Position 51 (T51) interacts with pyruvate. The active-site Proton donor/acceptor is Y139. The active-site Schiff-base intermediate with substrate is the K167. I209 lines the pyruvate pocket.

It belongs to the DapA family. As to quaternary structure, homotetramer; dimer of dimers.

The protein resides in the cytoplasm. The enzyme catalyses L-aspartate 4-semialdehyde + pyruvate = (2S,4S)-4-hydroxy-2,3,4,5-tetrahydrodipicolinate + H2O + H(+). It participates in amino-acid biosynthesis; L-lysine biosynthesis via DAP pathway; (S)-tetrahydrodipicolinate from L-aspartate: step 3/4. Catalyzes the condensation of (S)-aspartate-beta-semialdehyde [(S)-ASA] and pyruvate to 4-hydroxy-tetrahydrodipicolinate (HTPA). The chain is 4-hydroxy-tetrahydrodipicolinate synthase from Haemophilus influenzae (strain ATCC 51907 / DSM 11121 / KW20 / Rd).